A 2042-amino-acid polypeptide reads, in one-letter code: Cell adhesion molecule DSCAML1 (2042 aa).

The signal sequence occupies residues 1 to 17; that stretch reads MWLVTFFLLYSLRKAHT. The Extracellular segment spans residues 18–1592; the sequence is EDVGTSLYFV…AQGEGDDVKK (1575 aa). Asn28 and Asn78 each carry an N-linked (GlcNAc...) asparagine glycan. Ig-like C2-type domains follow at residues 37-107, 114-216, 227-311, 315-403, 409-502, 507-587, 597-686, 691-785, and 789-886; these read SSTV…AENS, PNIR…ARLS, PTML…GTLT, PLRV…SIIT, PRIV…ARIN, PSIR…LSIS, PPLI…RQLI, PRFV…MFLT, and PAMI…LTVQ. Disulfide bonds link Cys46-Cys102, Cys145-Cys197, Cys248-Cys295, Cys337-Cys387, and Cys430-Cys486. N-linked (GlcNAc...) asparagine glycans are attached at residues Asn369, Asn472, Asn514, Asn557, Asn667, Asn711, Asn750, Asn797, and Asn810. 2 cysteine pairs are disulfide-bonded: Cys527–Cys576 and Cys618–Cys670. Cys712 and Cys768 are joined by a disulfide. An intrachain disulfide couples Cys811 to Cys868. 4 Fibronectin type-III domains span residues 888–985, 990–1089, 1094–1190, and 1194–1289; these read PPDP…TEEA, PPMD…TLED, PPEN…TKED, and PPAG…AGKA. 6 N-linked (GlcNAc...) asparagine glycosylation sites follow: Asn927, Asn1083, Asn1145, Asn1163, Asn1276, and Asn1346. Positions 1279–1368 constitute an Ig-like C2-type 10 domain; that stretch reads EKVTIEPAGK…SGYYTCTATN (90 aa). A disulfide bond links Cys1312 and Cys1364. 2 Fibronectin type-III domains span residues 1384-1478 and 1479-1579; these read PPDQ…THGR and EPSF…TIPP. 3 N-linked (GlcNAc...) asparagine glycosylation sites follow: Asn1493, Asn1532, and Asn1562. A helical membrane pass occupies residues 1593 to 1613; that stretch reads LFTIACPIILATLGVALLFII. The Cytoplasmic portion of the chain corresponds to 1614-2042; the sequence is RKKRKEKRLK…GAYSKSYTLV (429 aa). 4 disordered regions span residues 1716–1742, 1781–1805, 1841–1865, and 1940–2042; these read PLID…HSTR, SDSY…TESA, SSDQ…PSEP, and PPAR…YTLV. The span at 1733-1742 shows a compositional bias: basic residues; the sequence is KSVKSAHSTR. Composition is skewed to polar residues over residues 1781 to 1790 and 1841 to 1863; these read SDSYSASLSQ and SSDQ…STPS. A compositionally biased stretch (pro residues) spans 1951–1960; the sequence is AKPPGLPPPS. A compositionally biased stretch (low complexity) spans 1961–1983; the sequence is SSSSSTTLPQRTLPMPTAASTAP. Residues 1984–1995 are compositionally biased toward pro residues; the sequence is APAPAPAAPAEP. 2 stretches are compositionally biased toward low complexity: residues 1996-2005 and 2023-2034; these read PANTTTTTTT and GAGRAQKQGAGA.

In terms of assembly, homodimer; mediates homophilic interactions to promote cell adhesion. SDK1, SDK2, DSCAM and DSCAML1 are expressed in non-overlapping subsets of interneurons and retinal ganglion cells (RGCs) that form synapses in distinct inner plexiform layer (IPL) sublaminae.

The protein resides in the cell membrane. It localises to the synapse. Its function is as follows. Cell adhesion molecule that plays a role in neuronal self-avoidance. Promotes repulsion between specific neuronal processes of either the same cell or the same subtype of cells. Adhesion molecule that promotes lamina-specific synaptic connections in the retina: expressed in specific subsets of interneurons and retinal ganglion cells (RGCs) and promotes synaptic connectivity via homophilic interactions. This chain is Cell adhesion molecule DSCAML1 (DSCAML1), found in Gallus gallus (Chicken).